The chain runs to 619 residues: Very-long-chain aldehyde decarbonylase GL1-1 (619 aa).

The next 5 helical transmembrane spans lie at L44–F64, D93–L113, G123–H143, A190–F210, and P322–S342. A Fatty acid hydroxylase domain is found at L129–T269.

Belongs to the sterol desaturase family. In terms of assembly, homodimer.

It is found in the endoplasmic reticulum membrane. The enzyme catalyses a long-chain fatty aldehyde + 2 NADPH + O2 + H(+) = a long-chain alkane + formate + 2 NADP(+) + H2O. Functionally, aldehyde decarbonylase involved in the conversion of aldehydes to alkanes. Core component of a very-long-chain alkane synthesis complex. This chain is Very-long-chain aldehyde decarbonylase GL1-1, found in Oryza sativa subsp. indica (Rice).